The following is a 790-amino-acid chain: Cadherin-6 (790 aa).

An N-terminal signal peptide occupies residues 1 to 18 (MRTYRYFLLLFWVGQPYP). A propeptide spanning residues 19–53 (TFSNPLSKRTSGFPAKRKALELSANSRNELSRSKR) is cleaved from the precursor. 5 consecutive Cadherin domains span residues 54–159 (SWMW…EPIF), 160–268 (TKDV…PPRF), 269–383 (PQST…PPVF), 384–486 (SKLA…DNAP), and 487–608 (EFAE…LIHP). Residues 54–615 (SWMWNQFFLL…IHPTGLSTGA (562 aa)) are Extracellular-facing. Asn-255 is a glycosylation site (N-linked (GlcNAc...) asparagine). The segment at 260-291 (DVNDNPPRFPQSTYQFKTPESSPPGTPIGRIK) is disordered. The span at 269–279 (PQSTYQFKTPE) shows a compositional bias: polar residues. 4 N-linked (GlcNAc...) asparagine glycosylation sites follow: Asn-399, Asn-437, Asn-455, and Asn-536. The helical transmembrane segment at 616–636 (LVAILLCIVILLVTVVLFAAL) threads the bilayer. The Cytoplasmic segment spans residues 637-790 (RRQRKKEPLI…YGGMDSDKDS (154 aa)). A phosphoserine mark is found at Ser-786 and Ser-790.

Its subcellular location is the cell membrane. Functionally, cadherins are calcium-dependent cell adhesion proteins. They preferentially interact with themselves in a homophilic manner in connecting cells; cadherins may thus contribute to the sorting of heterogeneous cell types. The sequence is that of Cadherin-6 (Cdh6) from Mus musculus (Mouse).